Reading from the N-terminus, the 126-residue chain is Small ribosomal subunit protein eS6 (126 aa).

Belongs to the eukaryotic ribosomal protein eS6 family.

The chain is Small ribosomal subunit protein eS6 from Nanoarchaeum equitans (strain Kin4-M).